The chain runs to 185 residues: Neuronal vesicle trafficking-associated protein 1 (185 aa).

The Cytoplasmic portion of the chain corresponds to methionine 1–lysine 82. A helical; Signal-anchor for type II membrane protein transmembrane segment spans residues valine 83–tyrosine 103. The Lumenal segment spans residues lysine 104–alanine 185.

It belongs to the NSG family.

The protein localises to the membrane. It localises to the golgi apparatus. The protein resides in the trans-Golgi network membrane. Its subcellular location is the endosome membrane. It is found in the cell projection. The protein localises to the dendrite. It localises to the early endosome membrane. The protein resides in the late endosome membrane. Its subcellular location is the lysosome lumen. It is found in the recycling endosome membrane. The protein localises to the cytoplasmic vesicle membrane. It localises to the golgi stack membrane. The protein resides in the endosome. Its subcellular location is the multivesicular body membrane. Functionally, plays a role in the recycling mechanism in neurons of multiple receptors and acts at the level of early endosomes to promote sorting of receptors toward a recycling pathway. This is Neuronal vesicle trafficking-associated protein 1 from Gallus gallus (Chicken).